We begin with the raw amino-acid sequence, 246 residues long: Acetoacetate decarboxylase (246 aa).

Residue Lys-116 is the Schiff-base intermediate with acetoacetate of the active site.

This sequence belongs to the ADC family.

The enzyme catalyses acetoacetate + H(+) = acetone + CO2. In terms of biological role, catalyzes the conversion of acetoacetate to acetone and carbon dioxide. This Burkholderia mallei (strain NCTC 10247) protein is Acetoacetate decarboxylase.